The sequence spans 413 residues: Tyrosine--tRNA ligase (413 aa).

The short motif at 59-68 (PTAPDIHLGH) is the 'HIGH' region element. The 'KMSKS' region signature appears at 243–247 (KMSKS). Residue lysine 246 participates in ATP binding. Residues 351–411 (LAIGQLLKQA…GKRRFARVTL (61 aa)) form the S4 RNA-binding domain.

This sequence belongs to the class-I aminoacyl-tRNA synthetase family. TyrS type 2 subfamily. In terms of assembly, homodimer.

Its subcellular location is the cytoplasm. The catalysed reaction is tRNA(Tyr) + L-tyrosine + ATP = L-tyrosyl-tRNA(Tyr) + AMP + diphosphate + H(+). Functionally, catalyzes the attachment of tyrosine to tRNA(Tyr) in a two-step reaction: tyrosine is first activated by ATP to form Tyr-AMP and then transferred to the acceptor end of tRNA(Tyr). The polypeptide is Tyrosine--tRNA ligase (Burkholderia pseudomallei (strain 1710b)).